The primary structure comprises 326 residues: L-lactate dehydrogenase (326 aa).

39 to 60 (DVVTGMPEGKALDDSQATSIAD) is a binding site for NAD(+). Positions 99, 131, and 162 each coordinate substrate. Asn131 contributes to the NAD(+) binding site. His186 (proton acceptor) is an active-site residue.

The protein belongs to the LDH/MDH superfamily. LDH family. In terms of assembly, homotetramer.

The catalysed reaction is (S)-lactate + NAD(+) = pyruvate + NADH + H(+). It functions in the pathway fermentation; pyruvate fermentation to lactate; (S)-lactate from pyruvate: step 1/1. This Toxoplasma gondii protein is L-lactate dehydrogenase.